Consider the following 198-residue polypeptide: Superoxide dismutase [Mn], mitochondrial (198 aa).

Position 26 (H26) interacts with Mn(2+). Y34 is modified (3'-nitrotyrosine). An N6-acetyllysine; alternate mark is found at K44 and K51. N6-succinyllysine; alternate occurs at positions 44 and 51. Mn(2+) is bound at residue H74. K90 is modified (N6-acetyllysine). N6-acetyllysine; alternate occurs at positions 98 and 106. N6-succinyllysine; alternate is present on residues K98 and K106. Positions 159 and 163 each coordinate Mn(2+). At K178 the chain carries N6-acetyllysine.

The protein belongs to the iron/manganese superoxide dismutase family. In terms of assembly, homotetramer. The cofactor is Mn(2+). Post-translationally, nitrated under oxidative stress. Nitration coupled with oxidation inhibits the catalytic activity. Acetylation at Lys-98 decreases enzymatic activity. Deacetylated by SIRT3 upon exposure to ionizing radiations or after long fasting. In terms of processing, polyubiquitinated; leading to proteasomal degradation. Deubiquitinated by USP36 which increases protein stability.

It is found in the mitochondrion matrix. The enzyme catalyses 2 superoxide + 2 H(+) = H2O2 + O2. Functionally, destroys superoxide anion radicals which are normally produced within the cells and which are toxic to biological systems. The polypeptide is Superoxide dismutase [Mn], mitochondrial (SOD2) (Macaca fuscata fuscata (Japanese macaque)).